The following is a 442-amino-acid chain: 3-ketoacyl-CoA thiolase (442 aa).

The active-site Acyl-thioester intermediate is Cys-105. Residues His-398 and Cys-428 each act as proton acceptor in the active site.

This sequence belongs to the thiolase-like superfamily. Thiolase family. As to quaternary structure, heterotetramer of two alpha chains (FadJ) and two beta chains (FadI).

Its subcellular location is the cytoplasm. It carries out the reaction an acyl-CoA + acetyl-CoA = a 3-oxoacyl-CoA + CoA. It functions in the pathway lipid metabolism; fatty acid beta-oxidation. Catalyzes the final step of fatty acid oxidation in which acetyl-CoA is released and the CoA ester of a fatty acid two carbons shorter is formed. The chain is 3-ketoacyl-CoA thiolase from Aliivibrio fischeri (strain ATCC 700601 / ES114) (Vibrio fischeri).